The primary structure comprises 320 residues: HPr kinase/phosphorylase (320 aa).

Active-site residues include histidine 141 and lysine 162. 156–163 contributes to the ATP binding site; it reads GHSGLGKS. Position 163 (serine 163) interacts with Mg(2+). Aspartate 180 functions as the Proton acceptor; for phosphorylation activity. Proton donor; for dephosphorylation activity in the catalytic mechanism. An important for the catalytic mechanism of both phosphorylation and dephosphorylation region spans residues 204-213; the sequence is LEVRGLGILN. Residue glutamate 205 coordinates Mg(2+). Residue arginine 248 is part of the active site. The segment at 269 to 274 is important for the catalytic mechanism of dephosphorylation; the sequence is PVAVGR.

It belongs to the HPrK/P family. Homohexamer. Mg(2+) is required as a cofactor.

It catalyses the reaction [HPr protein]-L-serine + ATP = [HPr protein]-O-phospho-L-serine + ADP + H(+). It carries out the reaction [HPr protein]-O-phospho-L-serine + phosphate + H(+) = [HPr protein]-L-serine + diphosphate. Catalyzes the ATP- as well as the pyrophosphate-dependent phosphorylation of a specific serine residue in HPr, a phosphocarrier protein of the phosphoenolpyruvate-dependent sugar phosphotransferase system (PTS). HprK/P also catalyzes the pyrophosphate-producing, inorganic phosphate-dependent dephosphorylation (phosphorolysis) of seryl-phosphorylated HPr (P-Ser-HPr). The polypeptide is HPr kinase/phosphorylase (Neisseria meningitidis serogroup A / serotype 4A (strain DSM 15465 / Z2491)).